We begin with the raw amino-acid sequence, 261 residues long: MSESLHLTRNGPILEITLDRPKANAIDAKTSFAMGEAFLNFRDDPELRVAIITGGGEKFFSAGWDLKAAAEGEAPDADFGPGGFAGLTEIFDLDKPVIAAVNGYAFGGGFELALAADFIVCAENASFALPEAKLGIVPDSGGVLRLPKLLPPAIVNEMVMTGRRMSAEEALRWGVVNRVVSQSELMDSARELAQQLVNSAPLAIAALKEIYRATSEMPVEEGYRYIRSGVLKHYPSVLHSEDALEGPQAFAEKRDPVWKGR.

E111 (nucleophile) is an active-site residue. E131 (proton acceptor) is an active-site residue.

The protein belongs to the enoyl-CoA hydratase/isomerase family.

It catalyses the reaction (R)-carnitinyl-CoA = crotonobetainyl-CoA + H2O. The protein operates within amine and polyamine metabolism; carnitine metabolism. Its function is as follows. Catalyzes the reversible dehydration of L-carnitinyl-CoA to crotonobetainyl-CoA. The chain is Carnitinyl-CoA dehydratase from Salmonella dublin (strain CT_02021853).